The chain runs to 306 residues: Ornithine carbamoyltransferase (306 aa).

Carbamoyl phosphate contacts are provided by residues 51 to 54, Gln78, Arg102, and 129 to 132; these read STRT and HPCQ. L-ornithine is bound by residues Asn160, Asp223, and 227-228; that span reads SM. Residues 263-264 and Arg291 each bind carbamoyl phosphate; that span reads CL.

This sequence belongs to the aspartate/ornithine carbamoyltransferase superfamily. OTCase family.

The protein localises to the cytoplasm. It carries out the reaction carbamoyl phosphate + L-ornithine = L-citrulline + phosphate + H(+). It participates in amino-acid biosynthesis; L-arginine biosynthesis; L-arginine from L-ornithine and carbamoyl phosphate: step 1/3. Reversibly catalyzes the transfer of the carbamoyl group from carbamoyl phosphate (CP) to the N(epsilon) atom of ornithine (ORN) to produce L-citrulline. In Nostoc punctiforme (strain ATCC 29133 / PCC 73102), this protein is Ornithine carbamoyltransferase (argF).